The sequence spans 377 residues: Interferon gamma receptor 1 (377 aa).

The first 23 residues, 1 to 23, serve as a signal peptide directing secretion; the sequence is MRTQIYISVTVLILLLKKSDLEA. Residues 24 to 235 lie on the Extracellular side of the membrane; sequence VRVPSPESVS…IRRYTPFTVY (212 aa). Residues 26-117 enclose the Fibronectin type-III domain; that stretch reads VPSPESVSVQ…DFFIFSFNEN (92 aa). Asparagine 78 and asparagine 186 each carry an N-linked (GlcNAc...) asparagine glycan. Residues 236–256 traverse the membrane as a helical segment; that stretch reads LYPVLGVTLTLLFITGIIILL. At 257–377 the chain is on the cytoplasmic side; it reads EKKCNSEMKK…TVDSYGPRLL (121 aa). Residues 326–377 form a disordered region; that stretch reads VYSEDKNSYGPNDLVEDEQSDLSDFYDCPHAPKQKREMSPGDTVDSYGPRLL.

Belongs to the type II cytokine receptor family. As to expression, highly expressed in spleen. Also detected in brain, kidney, gill, intestine and heart. Expressed at very low levels in muscle. In immune cell populations, shows highest expression in monocytes, and slightly lower expression in peripheral blood leukocytes, splenocytes, neutrophils and mature macrophages.

It localises to the cell membrane. Its function is as follows. Receptor which shows binding specificity for the cytokine ifng1r (interferon gamma-related). The polypeptide is Interferon gamma receptor 1 (Carassius auratus (Goldfish)).